Here is a 183-residue protein sequence, read N- to C-terminus: MELELGLRLALPSPSPSPATATAAGSELDLLNSAPGSCRKRGFEEALGGFKTDDDNDDGNGRGGDGDSDGEMGNKRRKLVGWPPVKCLHRRRDGGCGGGYVKVKMEGLAIGRKLDLSILGSYAELLDTLHLMFPSTNQEDGHDRRRRHPYAVTYEDGEGDWMQVGDVPWEAFAKSVKRLKILV.

Disordered regions lie at residues Met-1–Ala-23 and Gly-42–Arg-77. The short motif at Leu-3–Leu-7 is the EAR-like (transcriptional repression) element. The region spanning Gly-98 to Val-183 is the PB1 domain.

This sequence belongs to the Aux/IAA family. Homodimers and heterodimers. Expressed at very low levels in etiolated seedlings and flowers.

Its subcellular location is the nucleus. Aux/IAA proteins are short-lived transcriptional factors that function as repressors of early auxin response genes at low auxin concentrations. This chain is Auxin-responsive protein IAA20 (IAA20), found in Oryza sativa subsp. japonica (Rice).